Here is a 460-residue protein sequence, read N- to C-terminus: 4-O-methyl-glucuronoyl methylesterase (460 aa).

A signal peptide spans 1–17; sequence MASRFFALLLLAIPIQA. Gln18 carries the post-translational modification Pyrrolidone carboxylic acid. Residues 18–53 enclose the CBM1 domain; sequence QSPVWGQCGGIGWSGPTTCVGGATCVSYNPYYSQCI. Cystine bridges form between Cys96–Cys131, Cys277–Cys412, and Cys309–Cys384. The GXSYXG catalytic site motif motif lies at 276–281; that stretch reads GCSRNG. Ser278 serves as the catalytic Nucleophile. Substrate-binding residues include Lys282, Gln324, Glu332, and Trp375. His411 functions as the Proton donor/acceptor in the catalytic mechanism. Residue Asn447 is glycosylated (N-linked (GlcNAc...) asparagine).

This sequence belongs to the carbohydrate esterase 15 (CE15) family.

The protein resides in the secreted. The enzyme catalyses a 4-O-methyl-alpha-D-glucuronosyl ester derivative + H2O = 4-O-methyl-alpha-D-glucuronate derivative + an alcohol + H(+). Functionally, glucuronoyl esterase which may play a significant role in biomass degradation, as it is considered to disconnect hemicellulose from lignin through the hydrolysis of the ester bond between 4-O-methyl-D-glucuronic acid residues of glucuronoxylans and aromatic alcohols of lignin. Does not hydrolyze substrates of other carbohydrate esterases such as acetylxylan esterase, acetyl esterase and feruloyl esterase. This Hypocrea jecorina (strain QM6a) (Trichoderma reesei) protein is 4-O-methyl-glucuronoyl methylesterase.